A 419-amino-acid chain; its full sequence is Zinc finger protein Pegasus (419 aa).

C2H2-type zinc fingers lie at residues 79–101 (LKCR…IRIH), 107–129 (HRCH…MRSH), and 135–158 (YKCE…RRRH). 2 disordered regions span residues 203–255 (LQKP…DQDM) and 310–360 (SVNT…TPVQ). Residues 208–228 (SEQHHLGDFTHDLPPHAHLHQ) are compositionally biased toward basic and acidic residues. 2 stretches are compositionally biased toward polar residues: residues 310–320 (SVNTAQASSPI) and 341–360 (ERTS…TPVQ). 2 consecutive C2H2-type zinc fingers follow at residues 366 to 388 (HHCP…MGCH) and 394 to 418 (FQCN…RGQH).

This sequence belongs to the Ikaros C2H2-type zinc-finger protein family. As to quaternary structure, probably self-associates.

Its subcellular location is the nucleus. Functionally, transcriptional repressor that binds the core 5'GNNTGTNG-3' DNA consensus sequence. This chain is Zinc finger protein Pegasus (ikzf5), found in Danio rerio (Zebrafish).